Here is a 226-residue protein sequence, read N- to C-terminus: Urease accessory protein UreF (226 aa).

It belongs to the UreF family. In terms of assembly, ureD, UreF and UreG form a complex that acts as a GTP-hydrolysis-dependent molecular chaperone, activating the urease apoprotein by helping to assemble the nickel containing metallocenter of UreC. The UreE protein probably delivers the nickel.

It localises to the cytoplasm. Functionally, required for maturation of urease via the functional incorporation of the urease nickel metallocenter. The sequence is that of Urease accessory protein UreF from Nitrosospira multiformis (strain ATCC 25196 / NCIMB 11849 / C 71).